Reading from the N-terminus, the 432-residue chain is D-amino acid dehydrogenase (432 aa).

3–17 (VLVLGSGVVGTASAY) provides a ligand contact to FAD.

This sequence belongs to the DadA oxidoreductase family. Requires FAD as cofactor.

It carries out the reaction a D-alpha-amino acid + A + H2O = a 2-oxocarboxylate + AH2 + NH4(+). It participates in amino-acid degradation; D-alanine degradation; NH(3) and pyruvate from D-alanine: step 1/1. Functionally, oxidative deamination of D-amino acids. The polypeptide is D-amino acid dehydrogenase (Stutzerimonas stutzeri (strain A1501) (Pseudomonas stutzeri)).